The sequence spans 351 residues: uncharacterized protein (351 aa).

The Mn(2+) site is built by D215, D226, H290, E319, and E333.

The protein belongs to the peptidase M24B family. Mn(2+) serves as cofactor.

This is an uncharacterized protein from Staphylococcus aureus (strain MSSA476).